We begin with the raw amino-acid sequence, 312 residues long: MSSPRSFFWVQEYFTPWDYTARAVTRILAYRKTPFQEMLIAETGAFGKGLMLDGHWQSTTVDEFLYHEALVHPAMVQVVQAGGIPRRVLVLGGAEGATLREVLRWRSVEQVVMVDIDGEVVAACREHLPEMHQGSFEDPRVEVVIADALDFLQETGPIWDVILSDLSDPIESGPAYRLFTQEFFRQIRSKLQPDGAFTIQAGPTGPVELHQHTRIVRTLKTVFAAVQPYAIYAPTYGGPLGFALAAQDPISPRPEPEQIDQILSQQLDPERGALQFIDGITLLGLYQVPAHLRRAIAAETVVYTLDNPPRIE.

In terms of domain architecture, PABS spans 7-247; that stretch reads FFWVQEYFTP…GPLGFALAAQ (241 aa). Position 36 (Gln-36) interacts with S-methyl-5'-thioadenosine. Spermidine contacts are provided by His-67 and Glu-95. Residues Asp-115 and 147-148 contribute to the S-methyl-5'-thioadenosine site; that span reads DA. Residue Asp-165 is the Proton acceptor of the active site. S-methyl-5'-thioadenosine is bound at residue Pro-174.

Belongs to the spermidine/spermine synthase family. Homodimer or homotetramer.

It is found in the cytoplasm. It catalyses the reaction S-adenosyl 3-(methylsulfanyl)propylamine + putrescine = S-methyl-5'-thioadenosine + spermidine + H(+). Its pathway is amine and polyamine biosynthesis; spermidine biosynthesis; spermidine from putrescine: step 1/1. Functionally, catalyzes the irreversible transfer of a propylamine group from the amino donor S-adenosylmethioninamine (decarboxy-AdoMet) to putrescine (1,4-diaminobutane) to yield spermidine. This chain is Polyamine aminopropyltransferase, found in Synechococcus sp. (strain JA-2-3B'a(2-13)) (Cyanobacteria bacterium Yellowstone B-Prime).